The chain runs to 223 residues: Cytotoxic T-lymphocyte protein 4 (223 aa).

The signal sequence occupies residues 1–35 (MACSGFQSHGAWLELTSRTWPCTALFSLLFIPVFS). The Extracellular portion of the chain corresponds to 38–161 (MHVAQPAVVL…IDPEPCPDSD (124 aa)). Positions 39 to 140 (HVAQPAVVLA…VELLYPPPYY (102 aa)) constitute an Ig-like V-type domain. Residues 46–50 (VLANS) are homodimerization. 2 disulfides stabilise this stretch: Cys58–Cys129 and Cys85–Cys103. Asn113 is a glycosylation site (N-linked (GlcNAc...) asparagine). Residues 134-139 (LYPPPY) are important for interaction with CD80 and CD86. Residue Asn145 is glycosylated (N-linked (GlcNAc...) asparagine). The tract at residues 150-155 (YVIDPE) is homodimerization. A helical transmembrane segment spans residues 162 to 182 (FLLWILAAVSSGLFFYSFLIT). Topologically, residues 183–223 (AVSLSKMLKKRSPLTTGVYVKMPPTEPECEKQFQPYFIPIN) are cytoplasmic. Tyr201 carries the post-translational modification Phosphotyrosine; by TXK and JAK2.

In terms of assembly, homodimer; disulfide-linked. Binds to CD80/B7-1 and CD86/B7.2. Interacts with ICOSLG. N-glycosylation is important for dimerization. In terms of processing, phosphorylation at Tyr-201 prevents binding to the AP-2 adapter complex, blocks endocytosis, and leads to retention of CTLA4 on the cell surface.

The protein resides in the cell membrane. Its function is as follows. Inhibitory receptor acting as a major negative regulator of T-cell responses. The affinity of CTLA4 for its natural B7 family ligands, CD80 and CD86, is considerably stronger than the affinity of their cognate stimulatory coreceptor CD28. The chain is Cytotoxic T-lymphocyte protein 4 (CTLA4) from Sus scrofa (Pig).